We begin with the raw amino-acid sequence, 514 residues long: Deoxynucleoside triphosphate triphosphohydrolase SAMHD1 homolog (514 aa).

The segment at 1–24 (MNNTFKYVNEDVSGTEGEESDYDP) is disordered. Lys-80 serves as a coordination point for GTP. Asn-83 is a binding site for a 2'-deoxyribonucleoside 5'-triphosphate. 101 to 109 (DTEQFQRLR) contacts GTP. Substrate is bound by residues Gln-113 and Arg-128. In terms of domain architecture, HD spans 128 to 259 (RFEHSIGVSH…SVDVDKFDYL (132 aa)). The Zn(2+) site is built by His-131, His-170, and Asp-171. His-174 lines the substrate pocket. Residue His-196 is part of the active site. Residues 252 to 258 (DVDKFDY), Tyr-258, and Asp-262 contribute to the substrate site. Zn(2+) is bound at residue Asp-254. Residues Arg-276, 291–293 (LSK), and Asn-297 each bind a 2'-deoxyribonucleoside 5'-triphosphate. Substrate is bound by residues Arg-305 and 309–314 (HKLVYT). Residues His-315 and Lys-316 each coordinate a 2'-deoxyribonucleoside 5'-triphosphate. GTP-binding residues include Arg-380 and Lys-384.

This sequence belongs to the SAMHD1 family. Homodimer; in absence of GTP and dNTP. Homotetramer; in GTP- and dNTP-bound form. Requires Zn(2+) as cofactor.

It carries out the reaction a 2'-deoxyribonucleoside 5'-triphosphate + H2O = a 2'-deoxyribonucleoside + triphosphate + H(+). Allosterically activated and regulated via the combined actions of GTP and dNTPs (dATP, dGTP, dTTP and dCTP): Allosteric site 1 binds GTP, while allosteric site 2 binds dNTP. Allosteric activation promotes the formation of highly active homotetramers. Its function is as follows. Has deoxynucleoside triphosphate (dNTPase) activity. In Dictyostelium discoideum (Social amoeba), this protein is Deoxynucleoside triphosphate triphosphohydrolase SAMHD1 homolog.